Reading from the N-terminus, the 443-residue chain is Trigger factor (443 aa).

Positions 161–246 (GDKVVIDFQG…IKKIMEGKLP (86 aa)) constitute a PPIase FKBP-type domain.

This sequence belongs to the FKBP-type PPIase family. Tig subfamily.

Its subcellular location is the cytoplasm. The enzyme catalyses [protein]-peptidylproline (omega=180) = [protein]-peptidylproline (omega=0). Its function is as follows. Involved in protein export. Acts as a chaperone by maintaining the newly synthesized protein in an open conformation. Functions as a peptidyl-prolyl cis-trans isomerase. This Legionella pneumophila subsp. pneumophila (strain Philadelphia 1 / ATCC 33152 / DSM 7513) protein is Trigger factor.